Reading from the N-terminus, the 369-residue chain is Protein-glutamate methylesterase/protein-glutamine glutaminase (369 aa).

The Response regulatory domain maps to 4-121 (KVLVVDDSSF…ARNRDEAVSL (118 aa)). Residue Asp55 is modified to 4-aspartylphosphate. Residues 146–171 (ATSSARPLASRTAAPAASAPARPATT) are compositionally biased toward low complexity. The interval 146–175 (ATSSARPLASRTAAPAASAPARPATTKFRA) is disordered. One can recognise a CheB-type methylesterase domain in the interval 176 to 369 (SGKKYQLTAI…ERMLVEVGLA (194 aa)). Catalysis depends on residues Ser188, His215, and Asp311.

Belongs to the CheB family. Post-translationally, phosphorylated by CheA. Phosphorylation of the N-terminal regulatory domain activates the methylesterase activity.

It localises to the cytoplasm. The enzyme catalyses [protein]-L-glutamate 5-O-methyl ester + H2O = L-glutamyl-[protein] + methanol + H(+). The catalysed reaction is L-glutaminyl-[protein] + H2O = L-glutamyl-[protein] + NH4(+). Involved in chemotaxis. Part of a chemotaxis signal transduction system that modulates chemotaxis in response to various stimuli. Catalyzes the demethylation of specific methylglutamate residues introduced into the chemoreceptors (methyl-accepting chemotaxis proteins or MCP) by CheR. Also mediates the irreversible deamidation of specific glutamine residues to glutamic acid. The chain is Protein-glutamate methylesterase/protein-glutamine glutaminase from Vibrio parahaemolyticus serotype O3:K6 (strain RIMD 2210633).